Consider the following 96-residue polypeptide: Putative septation protein SpoVG (96 aa).

Belongs to the SpoVG family.

Could be involved in septation. The protein is Putative septation protein SpoVG of Geobacillus sp. (strain WCH70).